The following is a 500-amino-acid chain: L-arabinose isomerase (500 aa).

Glu-306, Glu-333, His-350, and His-450 together coordinate Mn(2+).

It belongs to the arabinose isomerase family. As to quaternary structure, homohexamer. It depends on Mn(2+) as a cofactor.

It carries out the reaction beta-L-arabinopyranose = L-ribulose. Its pathway is carbohydrate degradation; L-arabinose degradation via L-ribulose; D-xylulose 5-phosphate from L-arabinose (bacterial route): step 1/3. In terms of biological role, catalyzes the conversion of L-arabinose to L-ribulose. The polypeptide is L-arabinose isomerase (Yersinia pseudotuberculosis serotype I (strain IP32953)).